Here is a 231-residue protein sequence, read N- to C-terminus: Flagellar L-ring protein (231 aa).

Residues 1–18 (MNRLMIVSLLGIATALGG) form the signal peptide. Cys-19 carries the N-palmitoyl cysteine lipid modification. Cys-19 carries S-diacylglycerol cysteine lipidation. Residues 118 to 141 (LSLSAEYGGSRDAKGDSQAGQSNS) are disordered.

This sequence belongs to the FlgH family. As to quaternary structure, the basal body constitutes a major portion of the flagellar organelle and consists of four rings (L,P,S, and M) mounted on a central rod.

The protein localises to the cell outer membrane. It is found in the bacterial flagellum basal body. Functionally, assembles around the rod to form the L-ring and probably protects the motor/basal body from shearing forces during rotation. In Pseudomonas aeruginosa (strain UCBPP-PA14), this protein is Flagellar L-ring protein.